The primary structure comprises 374 residues: Anhydro-N-acetylmuramic acid kinase (374 aa).

12 to 19 (GTSLDGID) lines the ATP pocket.

The protein belongs to the anhydro-N-acetylmuramic acid kinase family.

It catalyses the reaction 1,6-anhydro-N-acetyl-beta-muramate + ATP + H2O = N-acetyl-D-muramate 6-phosphate + ADP + H(+). The protein operates within amino-sugar metabolism; 1,6-anhydro-N-acetylmuramate degradation. It functions in the pathway cell wall biogenesis; peptidoglycan recycling. Functionally, catalyzes the specific phosphorylation of 1,6-anhydro-N-acetylmuramic acid (anhMurNAc) with the simultaneous cleavage of the 1,6-anhydro ring, generating MurNAc-6-P. Is required for the utilization of anhMurNAc either imported from the medium or derived from its own cell wall murein, and thus plays a role in cell wall recycling. In Sodalis glossinidius (strain morsitans), this protein is Anhydro-N-acetylmuramic acid kinase.